The sequence spans 372 residues: MPKERYIGLISGTSMDALDTALVQFDPLKIIATHGEPIPTELKKNLVALSTGTDNSIPSMGETDVALGRLFGEAVLTLLEKAKVSSDSIQAIGSHGQTIRHMPNGKHPFTLQIGDPNTIAALTGITTVADFRRRDMALGGQGAPLAPAFHEFLLRDQSENRLILNIGGIANLTFLPRDPEKSTIGFDTGPGNTLLDAWCLMNLNKDYDDQGQWAASGRVQEKLVAQLLAEPYFQTPPPKSTGREYFNLNWLKKNLNGEKFDPVDIQATLVELTARSVANCCRNFSMDSGSLWLCGGGARNHHLVNRLKVLCKPLRVTTTEEIGIHPDWLEAVCFAWLAKQTLEKKPGNLPSVTGAKKSAILGAIYWGEKFNY.

12-19 (GTSMDALD) is an ATP binding site.

This sequence belongs to the anhydro-N-acetylmuramic acid kinase family.

It carries out the reaction 1,6-anhydro-N-acetyl-beta-muramate + ATP + H2O = N-acetyl-D-muramate 6-phosphate + ADP + H(+). The protein operates within amino-sugar metabolism; 1,6-anhydro-N-acetylmuramate degradation. It participates in cell wall biogenesis; peptidoglycan recycling. Its function is as follows. Catalyzes the specific phosphorylation of 1,6-anhydro-N-acetylmuramic acid (anhMurNAc) with the simultaneous cleavage of the 1,6-anhydro ring, generating MurNAc-6-P. Is required for the utilization of anhMurNAc either imported from the medium or derived from its own cell wall murein, and thus plays a role in cell wall recycling. The sequence is that of Anhydro-N-acetylmuramic acid kinase from Coxiella burnetii (strain CbuK_Q154) (Coxiella burnetii (strain Q154)).